A 244-amino-acid chain; its full sequence is DNA repair protein RecO (244 aa).

This sequence belongs to the RecO family.

Functionally, involved in DNA repair and RecF pathway recombination. This is DNA repair protein RecO from Jannaschia sp. (strain CCS1).